The chain runs to 4543 residues: Low-density lipoprotein receptor-related protein 1 (4543 aa).

Positions 1-21 (MGPLLALAGCLLALLAAPAAR) are cleaved as a signal peptide. The Extracellular portion of the chain corresponds to 22–4419 (ALEAPKTCSP…EFIVGEQQSG (4398 aa)). 2 LDL-receptor class A domains span residues 27 to 68 (KTCS…ICPQ) and 72 to 112 (SRCQ…HCRE). 6 cysteine pairs are disulfide-bonded: Cys29–Cys42, Cys36–Cys55, Cys49–Cys66, Cys74–Cys87, Cys81–Cys100, and Cys94–Cys110. In terms of domain architecture, EGF-like 1 spans 113 to 151 (QLANCTALGCQHHCVPTLSGPACYCNNSFQLAEDRRSCK). N-linked (GlcNAc...) asparagine glycosylation occurs at Asn116. Intrachain disulfides connect Cys117/Cys126, Cys122/Cys135, Cys137/Cys150, Cys156/Cys166, Cys162/Cys175, and Cys177/Cys190. N-linked (GlcNAc...) asparagine glycosylation is present at Asn138. The 40-residue stretch at 152–191 (DFDECTVYGTCSQTCTNTEGSYTCSCVEGYLLQPDNRSCK) folds into the EGF-like 2; calcium-binding domain. N-linked (GlcNAc...) asparagine glycans are attached at residues Asn187 and Asn276. 3 LDL-receptor class B repeats span residues 294 to 336 (GNFY…DPAM), 337 to 380 (GKVF…DLVS), and 381 to 424 (RLVY…FENY). An N-linked (GlcNAc...) asparagine glycan is attached at Asn359. Asn448 carries N-linked (GlcNAc...) asparagine glycosylation. Residues 476-522 (RSHACEPDQFGKPGGCSDICLLGNSHKSRTCRCRSGFSLGSDGKSCK) form the EGF-like 3 domain. Cystine bridges form between Cys480–Cys495, Cys491–Cys506, and Cys508–Cys521. LDL-receptor class B repeat units lie at residues 573 to 615 (GFIY…DWMG), 616 to 661 (NNLY…DPLN), 662 to 712 (GWMY…DIPA), and 713 to 756 (KILY…YSSF). Asn731 carries N-linked (GlcNAc...) asparagine glycosylation. The EGF-like 4 domain maps to 801 to 841 (GSNKCRVNNGGCSSLCLATPRGRQCACAEDQILGADSVTCE). Disulfide bonds link Cys805–Cys816, Cys812–Cys825, Cys827–Cys840, Cys852–Cys864, Cys859–Cys877, Cys871–Cys888, Cys893–Cys905, Cys900–Cys918, Cys912–Cys929, Cys934–Cys946, Cys941–Cys959, Cys953–Cys969, Cys974–Cys987, Cys982–Cys1000, Cys994–Cys1009, Cys1013–Cys1025, Cys1020–Cys1038, Cys1032–Cys1049, Cys1060–Cys1073, Cys1067–Cys1086, Cys1080–Cys1095, Cys1102–Cys1116, Cys1110–Cys1129, Cys1123–Cys1138, Cys1143–Cys1157, Cys1150–Cys1170, Cys1164–Cys1180, Cys1183–Cys1194, Cys1190–Cys1204, Cys1206–Cys1219, Cys1225–Cys1235, Cys1231–Cys1244, and Cys1246–Cys1259. 8 consecutive LDL-receptor class A domains span residues 850-890 (PQCQ…LCHQ), 891-931 (HTCP…TCSA), 932-971 (RTCS…SCAY), 972-1011 (PTCF…GCSH), 1011-1051 (HSCS…NCTN), 1058-1097 (GGCH…NCEG), 1100-1140 (HVCD…NCES), and 1141-1180 (LVCK…GELC). Trp869, Asp872, Asp874, Asp876, Asp882, and Glu883 together coordinate Ca(2+). A glycan (N-linked (GlcNAc...) asparagine) is linked at Asn926. 6 residues coordinate Ca(2+): Trp1030, Asp1033, Asp1035, Asp1037, Asp1043, and Glu1044. Asn1048 is a glycosylation site (N-linked (GlcNAc...) asparagine). The Ca(2+) site is built by Trp1078, Asp1081, Asp1083, Asp1085, Asp1091, and Glu1092. 2 N-linked (GlcNAc...) asparagine glycosylation sites follow: Asn1152 and Asn1153. EGF-like domains follow at residues 1181-1220 (DQCS…KTCQ) and 1221-1260 (IQSY…ESCR). N-linked (GlcNAc...) asparagine glycans are attached at residues Asn1193 and Asn1216. Asn1305 carries N-linked (GlcNAc...) asparagine glycosylation. LDL-receptor class B repeat units lie at residues 1307 to 1353 (SSLY…DWIA), 1354 to 1396 (GNIY…DPRY), 1397 to 1443 (GILF…DYLE), 1444 to 1488 (KRIL…YGGE), and 1489 to 1529 (VYWT…YHPS). Asn1509 is a glycosylation site (N-linked (GlcNAc...) asparagine). Residues 1534 to 1577 (APNPCEANGGKGPCSHLCLINYNRTLSCACPHLMKLDKDNTTCY) form the EGF-like 7 domain. Intrachain disulfides connect Cys1538/Cys1551, Cys1547/Cys1561, and Cys1563/Cys1576. N-linked (GlcNAc...) asparagine glycans are attached at residues Asn1556, Asn1573, Asn1614, and Asn1643. LDL-receptor class B repeat units follow at residues 1625 to 1667 (QRIY…DWVS), 1668 to 1711 (RNLF…HPLH), 1712 to 1751 (GKLY…DYPE), and 1752 to 1796 (SKLY…MGDK). 4 N-linked (GlcNAc...) asparagine glycosylation sites follow: Asn1721, Asn1731, Asn1761, and Asn1823. An EGF-like 8 domain is found at 1842-1883 (GSNPCSVNNGDCSQLCLPTSETSRSCMCTAGYSLKSGQQSCE). 3 disulfide bridges follow: Cys1846-Cys1857, Cys1853-Cys1867, and Cys1869-Cys1882. N-linked (GlcNAc...) asparagine glycosylation occurs at Asn1929. LDL-receptor class B repeat units follow at residues 1930 to 1972 (DTIY…DWIA), 1973 to 2015 (GNIY…HPEK), 2016 to 2059 (GYLF…DYED), and 2060 to 2103 (GKLY…FEDY). Residues Asn1991 and Asn2044 are each glycosylated (N-linked (GlcNAc...) asparagine). N-linked (GlcNAc...) asparagine glycans are attached at residues Asn2113 and Asn2123. The EGF-like 9 domain maps to 2151–2191 (GTNVCAQNNGGCQQLCLFRGGGRRTCACAHGMLSEDGVSCR). Disulfide bonds link Cys2155–Cys2166, Cys2162–Cys2176, and Cys2178–Cys2190. LDL-receptor class B repeat units follow at residues 2247-2288 (NRIF…HRGW), 2289-2337 (DTLY…DECQ), 2338-2382 (NLMF…DHRA), 2383-2425 (EKIY…YGDY), and 2426-2467 (IFWT…VAND). N-linked (GlcNAc...) asparagine glycosylation is present at Asn2466. One can recognise an EGF-like 10 domain in the interval 2472–2512 (ELSPCRVNNGGCQDLCLLTPKGHVNCSCRGERVLQEDFTCK). 3 disulfides stabilise this stretch: Cys2476–Cys2487, Cys2483–Cys2497, and Cys2499–Cys2511. Residue Asn2496 is glycosylated (N-linked (GlcNAc...) asparagine). Asn2515 carries N-linked (GlcNAc...) asparagine glycosylation. LDL-receptor class A domains are found at residues 2516–2557 (STCN…YCSS), 2558–2596 (RKCK…PCNK), 2597–2635 (TSCA…NCTA), 2636–2684 (TDCS…NCPG), 2688–2730 (PKCP…RQDK), 2730–2769 (KFCY…RCRL), and 2770–2812 (TTCS…GCLY). 6 disulfides stabilise this stretch: Cys2518/Cys2531, Cys2526/Cys2544, Cys2538/Cys2555, Cys2560/Cys2572, Cys2567/Cys2585, and Cys2579/Cys2594. A glycan (N-linked (GlcNAc...) asparagine) is linked at Asn2595. Disulfide bonds link Cys2599-Cys2611, Cys2606-Cys2624, Cys2618-Cys2633, Cys2638-Cys2660, Cys2654-Cys2673, Cys2667-Cys2682, Cys2690-Cys2702, Cys2697-Cys2715, Cys2709-Cys2724, Cys2732-Cys2744, Cys2739-Cys2757, Cys2751-Cys2767, Cys2772-Cys2785, Cys2779-Cys2798, and Cys2792-Cys2810. Asn2614 and Asn2632 each carry an N-linked (GlcNAc...) asparagine glycan. Asn2813 is a glycosylation site (N-linked (GlcNAc...) asparagine). LDL-receptor class A domains lie at 2814-2853 (NTCD…ECEY), 2854-2897 (PTCG…RCSS), and 2900-2938 (SKCN…NCFI). Cystine bridges form between Cys2816–Cys2828, Cys2823–Cys2841, Cys2835–Cys2851, Cys2856–Cys2868, Cys2863–Cys2882, Cys2876–Cys2895, Cys2902–Cys2914, Cys2909–Cys2927, Cys2921–Cys2936, Cys2941–Cys2953, Cys2949–Cys2962, Cys2964–Cys2977, Cys2983–Cys2993, Cys2989–Cys3002, and Cys3004–Cys3018. Asn2903 carries an N-linked (GlcNAc...) asparagine glycan. The EGF-like 11 domain maps to 2939 to 2978 (NECLNKKLSGCSQECEDLKIGYKCRCRPGFRLKDDGKTCI). Residues 2979–3019 (DIDECSTTYPCSQKCINTLGSYKCLCIEGYKLKPDNPTSCK) enclose the EGF-like 12; calcium-binding domain. 2 N-linked (GlcNAc...) asparagine glycosylation sites follow: Asn3045 and Asn3086. 5 LDL-receptor class B repeats span residues 3066-3110 (QMIY…DWVG), 3111-3153 (GNLY…DVQN), 3154-3197 (GYLY…DYIN), 3198-3240 (SRIY…FEDY), and 3241-3281 (IYWT…YHPY). N-linked (GlcNAc...) asparagine glycosylation occurs at Asn3176. N-linked (GlcNAc...) asparagine glycosylation occurs at Asn3261. One can recognise an EGF-like 13 domain in the interval 3287–3328 (PNHPCKTNNAGCSNLCLLSPGGGHKCACPTNFYLGSDGKTCV). 3 cysteine pairs are disulfide-bonded: Cys3291-Cys3302, Cys3298-Cys3312, and Cys3314-Cys3327. LDL-receptor class A domains follow at residues 3329 to 3368 (SNCT…DCPE), 3369 to 3407 (FKCR…NCDI), 3408 to 3447 (HVCL…DCPE), 3448 to 3488 (VTCA…NCTQ), 3489 to 3530 (MTCG…ECDE), 3531 to 3569 (RTCE…SCTP), 3570 to 3608 (RPCS…DCIP), 3608 to 3646 (PRCE…DCGT), 3649 to 3689 (RTCP…ECLK), 3690 to 3730 (FQCP…DCES), and 3736 to 3776 (KSCS…SCSH). Asn3330 is a glycosylation site (N-linked (GlcNAc...) asparagine). 38 cysteine pairs are disulfide-bonded: Cys3331–Cys3343, Cys3338–Cys3356, Cys3350–Cys3366, Cys3371–Cys3383, Cys3378–Cys3396, Cys3390–Cys3405, Cys3410–Cys3423, Cys3417–Cys3436, Cys3430–Cys3445, Cys3450–Cys3463, Cys3457–Cys3476, Cys3470–Cys3486, Cys3491–Cys3504, Cys3498–Cys3517, Cys3511–Cys3528, Cys3533–Cys3545, Cys3540–Cys3558, Cys3552–Cys3567, Cys3572–Cys3584, Cys3579–Cys3597, Cys3591–Cys3606, Cys3610–Cys3622, Cys3617–Cys3635, Cys3629–Cys3644, Cys3658–Cys3676, Cys3670–Cys3687, Cys3692–Cys3706, Cys3700–Cys3719, Cys3713–Cys3728, Cys3738–Cys3752, Cys3747–Cys3765, Cys3759–Cys3774, Cys3783–Cys3796, Cys3790–Cys3805, Cys3807–Cys3820, Cys3826–Cys3836, Cys3832–Cys3845, and Cys3847–Cys3858. Asn3485 is a glycosylation site (N-linked (GlcNAc...) asparagine). Asn3659 is a glycosylation site (N-linked (GlcNAc...) asparagine). 2 consecutive EGF-like domains span residues 3779 to 3821 (KSYD…NSCQ) and 3822 to 3859 (DVNE…NMCK). The N-linked (GlcNAc...) asparagine glycan is linked to Asn3786. Asn3837 is a glycosylation site (N-linked (GlcNAc...) asparagine). LDL-receptor class B repeat units lie at residues 3910–3952 (NKIY…THLN), 3969–4011 (GNIY…DPLR), 4012–4055 (GTMY…DYHN), and 4056–4100 (ERLY…FEDY). The Recognition site for proteolytical processing signature appears at 3939-3942 (RNRR). Asn3952 carries an N-linked (GlcNAc...) asparagine glycan. 2 N-linked (GlcNAc...) asparagine glycosylation sites follow: Asn4074 and Asn4124. EGF-like domains are found at residues 4146 to 4182 (VTNP…GTCV), 4195 to 4231 (TTDT…ERCQ), 4231 to 4267 (QINQ…SRCD), 4267 to 4303 (DQQV…DRCQ), 4303 to 4339 (QYQQ…AQCQ), 4339 to 4374 (QDNK…PSCL), and 4372 to 4409 (SCLT…MRCE). Disulfide bonds link Cys4150/Cys4159, Cys4155/Cys4168, Cys4170/Cys4181, Cys4199/Cys4209, Cys4203/Cys4219, Cys4221/Cys4230, Cys4235/Cys4245, Cys4239/Cys4255, Cys4257/Cys4266, Cys4271/Cys4281, Cys4275/Cys4291, Cys4293/Cys4302, Cys4307/Cys4317, Cys4311/Cys4327, Cys4329/Cys4338, Cys4343/Cys4351, Cys4346/Cys4362, Cys4364/Cys4373, Cys4376/Cys4386, Cys4380/Cys4397, and Cys4399/Cys4408. An N-linked (GlcNAc...) asparagine glycan is attached at Asn4178. N-linked (GlcNAc...) asparagine glycosylation occurs at Asn4278. The chain crosses the membrane as a helical span at residues 4420-4443 (RTASIVIPILLLLLLLAVVAFAWY). Over 4444-4543 (KWRIKGAKGF…ADDDLTDPLA (100 aa)) the chain is Cytoplasmic. The NPXY motif motif lies at 4501–4506 (FTNPVY). The tract at residues 4522–4543 (STDEKRELLARGADDDLTDPLA) is disordered. Positions 4523 to 4535 (TDEKRELLARGAD) are enriched in basic and acidic residues.

The protein belongs to the LDLR family. Binds vitellogenin and LRPAP1 (alpha 2-macroglobulin). Cleaved into a 85 kDa membrane-spanning subunit (LRP-85) and a 515 kDa large extracellular domain (LRP-515) that remains non-covalently associated. In terms of tissue distribution, somatic.

It localises to the membrane. The protein resides in the coated pit. Endocytic receptor involved in endocytosis and in phagocytosis of apoptotic cells. Involved in cellular lipid homeostasis. Involved in the plasma clearance of chylomicron remnants and activated LRPAP1 (alpha 2-macroglobulin), as well as the local metabolism of complexes between plasminogen activators and their endogenous inhibitors. Acts as an alpha-2-macroglobulin receptor. This Gallus gallus (Chicken) protein is Low-density lipoprotein receptor-related protein 1 (LRP1).